A 59-amino-acid chain; its full sequence is Large ribosomal subunit protein uL30 (59 aa).

The protein belongs to the universal ribosomal protein uL30 family. Part of the 50S ribosomal subunit.

In Clostridium botulinum (strain ATCC 19397 / Type A), this protein is Large ribosomal subunit protein uL30.